The following is a 437-amino-acid chain: Enolase superfamily member DDB_G0284701 (437 aa).

Catalysis depends on K217, which acts as the Proton acceptor. 3 residues coordinate Mn(2+): D251, E279, and D321. The active-site Proton donor is D395.

The protein belongs to the mandelate racemase/muconate lactonizing enzyme family.

The protein is Enolase superfamily member DDB_G0284701 of Dictyostelium discoideum (Social amoeba).